The chain runs to 151 residues: Aspartate carbamoyltransferase regulatory chain (151 aa).

The Zn(2+) site is built by Cys107, Cys112, Cys135, and Cys138.

The protein belongs to the PyrI family. As to quaternary structure, contains catalytic and regulatory chains. Zn(2+) serves as cofactor.

In terms of biological role, involved in allosteric regulation of aspartate carbamoyltransferase. The protein is Aspartate carbamoyltransferase regulatory chain of Thermococcus gammatolerans (strain DSM 15229 / JCM 11827 / EJ3).